Consider the following 93-residue polypeptide: Acylphosphatase (93 aa).

The 89-residue stretch at 5–93 (TAILRVTGFV…EERKTFDIVY (89 aa)) folds into the Acylphosphatase-like domain. Active-site residues include Arg-20 and Asn-38.

It belongs to the acylphosphatase family.

The catalysed reaction is an acyl phosphate + H2O = a carboxylate + phosphate + H(+). This Listeria monocytogenes serotype 4b (strain F2365) protein is Acylphosphatase (acyP).